A 522-amino-acid polypeptide reads, in one-letter code: GMP synthase [glutamine-hydrolyzing] (522 aa).

One can recognise a Glutamine amidotransferase type-1 domain in the interval 5-204 (YILIIDFGSQ…VKNICNYTNV (200 aa)). Catalysis depends on Cys-82, which acts as the Nucleophile. Catalysis depends on residues His-178 and Glu-180. The GMPS ATP-PPase domain occupies 205-397 (IKYSLSIRKI…IGIPKEIIFR (193 aa)). ATP is bound at residue 232-238 (SGGIDSF).

Homodimer.

The catalysed reaction is XMP + L-glutamine + ATP + H2O = GMP + L-glutamate + AMP + diphosphate + 2 H(+). It functions in the pathway purine metabolism; GMP biosynthesis; GMP from XMP (L-Gln route): step 1/1. Catalyzes the synthesis of GMP from XMP. This is GMP synthase [glutamine-hydrolyzing] from Wigglesworthia glossinidia brevipalpis.